We begin with the raw amino-acid sequence, 1563 residues long: Ribulose bisphosphate carboxylase (1563 aa).

Residues histidine 32 and serine 79 each coordinate substrate. Residues 197–217 (LAAAFVGASTTRKASSVARRA) constitute a propeptide, linker. Asparagine 328 contributes to the substrate binding site. Lysine 383 serves as the catalytic Proton acceptor. Residue lysine 385 coordinates substrate. The Mg(2+) site is built by lysine 408, aspartate 410, and glutamate 411. Lysine 408 bears the N6-carboxylysine mark. Histidine 504 serves as the catalytic Proton acceptor. Positions 505, 538, and 585 each coordinate substrate. The propeptide at 703–723 (LAAAFVGASTTRKASSVARRA) is linker. Residue asparagine 834 participates in substrate binding. Lysine 889 functions as the Proton acceptor in the catalytic mechanism. Position 891 (lysine 891) interacts with substrate. Mg(2+) contacts are provided by lysine 914, aspartate 916, and glutamate 917. At lysine 914 the chain carries N6-carboxylysine. Residue histidine 1010 is the Proton acceptor of the active site. The substrate site is built by arginine 1011, histidine 1044, and serine 1091. Residues 1209 to 1229 (LAAAFVGASTTRKASSVARRA) constitute a propeptide, linker. Asparagine 1340 contributes to the substrate binding site. Lysine 1395 acts as the Proton acceptor in catalysis. Lysine 1397 lines the substrate pocket. Mg(2+)-binding residues include lysine 1420, aspartate 1422, and glutamate 1423. The residue at position 1420 (lysine 1420) is an N6-carboxylysine. The Proton acceptor role is filled by histidine 1516. Substrate is bound by residues arginine 1517 and histidine 1550.

The protein belongs to the RuBisCO large chain family. Type II subfamily. As to quaternary structure, homodimer. Requires Mg(2+) as cofactor. Post-translationally, in Western blots an approximately 220 kDa polyprotein and 2 smaller proteins of about 55 and 52 kDa are detected, suggesting the polyprotein may be cleaved at one end of the linker and then at the other end to give mature RuBisCO.

The protein resides in the plastid. Its subcellular location is the chloroplast. The enzyme catalyses 2 (2R)-3-phosphoglycerate + 2 H(+) = D-ribulose 1,5-bisphosphate + CO2 + H2O. It carries out the reaction D-ribulose 1,5-bisphosphate + O2 = 2-phosphoglycolate + (2R)-3-phosphoglycerate + 2 H(+). Functionally, ruBisCO catalyzes two reactions: the carboxylation of D-ribulose 1,5-bisphosphate, the primary event in carbon dioxide fixation, as well as the oxidative fragmentation of the pentose substrate. Both reactions occur simultaneously and in competition at the same active site. This is Ribulose bisphosphate carboxylase (rbcL) from Prorocentrum minimum (Dinoflagellate).